The sequence spans 183 residues: Putative 3-methyladenine DNA glycosylase (183 aa).

This sequence belongs to the DNA glycosylase MPG family.

This chain is Putative 3-methyladenine DNA glycosylase, found in Rickettsia africae (strain ESF-5).